The following is a 328-amino-acid chain: Reticulocalbin-3 (328 aa).

The signal sequence occupies residues 1-20 (MMWRWSFLLLLLLLRHWALG). The disordered stretch occupies residues 24 to 48 (PDAGPHGQDRVHHGTPLSEAPHDDA). EF-hand domains follow at residues 77 to 112 (QARL…TQQR), 113 to 148 (HIRD…HYEP), 163 to 198 (KMLA…EEFP), 200 to 235 (MRDI…EEPG), 241 to 276 (WVQT…PSQD), and 277 to 312 (QPLV…FVGS). D92, D94, W96, E101, D126, D128, D130, R132, and E137 together coordinate Ca(2+). The N-linked (GlcNAc...) asparagine glycan is linked to N140. The Ca(2+) site is built by D176, D178, D180, M182, E187, D213, N215, D217, Y219, E224, D254, N256, D258, R260, E265, D290, D292, D294, R296, and E301. The Prevents secretion from ER signature appears at 325–328 (HDEL).

It belongs to the CREC family. Interacts with PCSK6 (immature form including the propeptide); probably involved in the maturation and the secretion of PCSK6. In terms of processing, degraded by PCSK6 and other endoproteases including FURIN and PCSK5. Post-translationally, N-glycosylated. In terms of tissue distribution, highly expressed in lung and heart. Also detected in liver, spleen, kidney, skeletal muscle, intestine, stomach, and brain.

It is found in the endoplasmic reticulum lumen. Probable molecular chaperone assisting protein biosynthesis and transport in the endoplasmic reticulum. Required for the proper biosynthesis and transport of pulmonary surfactant-associated protein A/SP-A, pulmonary surfactant-associated protein D/SP-D and the lipid transporter ABCA3. By regulating both the proper expression and the degradation through the endoplasmic reticulum-associated protein degradation pathway of these proteins plays a crucial role in pulmonary surfactant homeostasis. Has an anti-fibrotic activity by negatively regulating the secretion of type I and type III collagens. This calcium-binding protein also transiently associates with immature PCSK6 and regulates its secretion. The sequence is that of Reticulocalbin-3 from Mus musculus (Mouse).